Here is a 288-residue protein sequence, read N- to C-terminus: MVLILDGKEVAKEVRASLVPRVAKFKETYGRAPQLSVVIVGDDKASHVYVKNKKIACEKIGMTSTIHTLPAETTQSELNQILSKLNNDNGVDGILVQFPLPKHLSSDEVLKLVSAEKDADGLTYESLGYFFAGKPLVSPCTPAGVMEILKHYRIPVEGKKAVVVGRSNIVGKPMALLLTEANATVTLCHSKTSNMSELTKQADLVVVAAGKARLLGKEDFKKDAIVIDVGMHGSGQGGKLCGDVRFEELDGWAKAATPVPGGVGPMTIAMLLKNTCQLAEQRARDPQF.

NADP(+) contacts are provided by residues 165-167 and Ser-190; that span reads GRS.

The protein belongs to the tetrahydrofolate dehydrogenase/cyclohydrolase family. As to quaternary structure, homodimer.

The catalysed reaction is (6R)-5,10-methylene-5,6,7,8-tetrahydrofolate + NADP(+) = (6R)-5,10-methenyltetrahydrofolate + NADPH. It carries out the reaction (6R)-5,10-methenyltetrahydrofolate + H2O = (6R)-10-formyltetrahydrofolate + H(+). It functions in the pathway one-carbon metabolism; tetrahydrofolate interconversion. Functionally, catalyzes the oxidation of 5,10-methylenetetrahydrofolate to 5,10-methenyltetrahydrofolate and then the hydrolysis of 5,10-methenyltetrahydrofolate to 10-formyltetrahydrofolate. In Bdellovibrio bacteriovorus (strain ATCC 15356 / DSM 50701 / NCIMB 9529 / HD100), this protein is Bifunctional protein FolD.